The following is a 384-amino-acid chain: Cytochrome b (384 aa).

4 consecutive transmembrane segments (helical) span residues 33–53 (YGSL…FLAM), 77–98 (WLIR…YLHI), 113–133 (WNVG…GYVL), and 178–198 (FFAF…IHLL). Heme b-binding residues include His-83 and His-97. Residues His-182 and His-196 each contribute to the heme b site. His-201 contacts a ubiquinone. Helical transmembrane passes span 226-246 (YKDL…ALFT), 288-308 (LGGV…PILH), 320-340 (LSQM…WIGG), and 347-367 (FIII…VLMP).

This sequence belongs to the cytochrome b family. In terms of assembly, the cytochrome bc1 complex contains 3 respiratory subunits (MT-CYB, CYC1 and UQCRFS1), 2 core proteins (UQCRC1 and UQCRC2) and probably 6 low-molecular weight proteins. It depends on heme b as a cofactor.

It is found in the mitochondrion inner membrane. Functionally, component of the ubiquinol-cytochrome c reductase complex (complex III or cytochrome b-c1 complex) that is part of the mitochondrial respiratory chain. The b-c1 complex mediates electron transfer from ubiquinol to cytochrome c. Contributes to the generation of a proton gradient across the mitochondrial membrane that is then used for ATP synthesis. This chain is Cytochrome b (mt-cyb), found in Anoplogaster cornuta (Common fangtooth).